Consider the following 306-residue polypeptide: Oxygen-dependent coproporphyrinogen-III oxidase (306 aa).

Ser-94 contributes to the substrate binding site. 2 residues coordinate a divalent metal cation: His-98 and His-108. Residue His-108 is the Proton donor of the active site. 110–112 (NVR) contacts substrate. Residues His-147 and His-177 each contribute to the a divalent metal cation site. An important for dimerization region spans residues 242 to 277 (YVEFNLVYDRGTLFGLQTGGRTESILMSMPPLVRWQ). 260-262 (GGR) contacts substrate.

It belongs to the aerobic coproporphyrinogen-III oxidase family. As to quaternary structure, homodimer. A divalent metal cation is required as a cofactor.

It is found in the cytoplasm. The catalysed reaction is coproporphyrinogen III + O2 + 2 H(+) = protoporphyrinogen IX + 2 CO2 + 2 H2O. It functions in the pathway porphyrin-containing compound metabolism; protoporphyrin-IX biosynthesis; protoporphyrinogen-IX from coproporphyrinogen-III (O2 route): step 1/1. Functionally, involved in the heme biosynthesis. Catalyzes the aerobic oxidative decarboxylation of propionate groups of rings A and B of coproporphyrinogen-III to yield the vinyl groups in protoporphyrinogen-IX. This chain is Oxygen-dependent coproporphyrinogen-III oxidase, found in Shewanella sediminis (strain HAW-EB3).